Here is a 504-residue protein sequence, read N- to C-terminus: Cobyric acid synthase (504 aa).

The GATase cobBQ-type domain maps to 258 to 454; it reads EIEIAIIKLP…LHGIFENDEW (197 aa). C339 acts as the Nucleophile in catalysis. H446 is a catalytic residue.

The protein belongs to the CobB/CobQ family. CobQ subfamily.

It functions in the pathway cofactor biosynthesis; adenosylcobalamin biosynthesis. Catalyzes amidations at positions B, D, E, and G on adenosylcobyrinic A,C-diamide. NH(2) groups are provided by glutamine, and one molecule of ATP is hydrogenolyzed for each amidation. In Prochlorococcus marinus (strain NATL2A), this protein is Cobyric acid synthase.